The primary structure comprises 311 residues: Transcription factor MafB (311 aa).

Disordered stretches follow at residues 35–78 (PLGR…PTEQ) and 150–199 (EDLA…EDRF). A compositionally biased stretch (low complexity) spans 54–76 (SVSSTPISTPCSSVPSSPSFSPT). Basic residues predominate over residues 157-167 (HPHHHHHHHHQ). Low complexity predominate over residues 168–194 (ASPTPSTSSSSSQQLQTSHQQHPPSSS). The basic motif stretch occupies residues 226–251 (RLKQKRRTLKNRGYAQSCRYKRVQQK). Residues 226 to 289 (RLKQKRRTLK…DAYKLKCEKL (64 aa)) form the bZIP domain. Residues 254-275 (LENEKTQLIQQVEQLKQEVTRL) form a leucine-zipper region.

It belongs to the bZIP family. Maf subfamily. Homodimer or heterodimer with other bHLH-Zip transcription factors. Binds DNA as a homodimer or heterodimer. Self-associates; the interaction requires the intact MAFB leucine-zipper domain. Interacts with FOS, HOXD12 and PRRX1. Expressed in brain, thymus, gut, lung, mesenterium, spleen, kidney, ovary and bursa.

The protein resides in the nucleus. Its function is as follows. Acts as a transcriptional activator or repressor. Positively regulates the expression of alpha-A crystallin genes during lens fiber cell differentiation. Binds to Maf recognition elements (MARE). The polypeptide is Transcription factor MafB (MAFB) (Gallus gallus (Chicken)).